The sequence spans 464 residues: UDP-glucose:undecaprenyl-phosphate glucose-1-phosphate transferase (464 aa).

Over 1-15 (MTNLKKRERAKTNAS) the chain is Cytoplasmic. The chain crosses the membrane as a helical span at residues 16–36 (LISMVQRFSDITIMFAGLWLV). Over 37–38 (CE) the chain is Periplasmic. The helical transmembrane segment at 39–59 (VSGLSFLYMHLLVALITLVVF) threads the bilayer. Topologically, residues 60–80 (QMLGGITDFYRSWRGVRAATE) are cytoplasmic. Residues 81-101 (FALLLQNWTLSVIFSAGLVAF) form a helical membrane-spanning segment. Topologically, residues 102 to 104 (NND) are periplasmic. Residues 105–125 (FDTQLKIWLAWYALTSIGLVV) form a helical membrane-spanning segment. Residues 126 to 278 (CRSCIRIGAG…VNRLLKRAED (153 aa)) are Cytoplasmic-facing. Residues 279 to 299 (IVLATLILLLISPVLCCIALA) form a helical membrane-spanning segment. Topologically, residues 300–464 (VKLSSPGPVI…FKGFVNKAAY (165 aa)) are periplasmic.

It belongs to the bacterial sugar transferase family.

The protein localises to the cell inner membrane. It carries out the reaction di-trans,octa-cis-undecaprenyl phosphate + UDP-alpha-D-glucose = alpha-D-glucosyl di-trans,octa-cis-undecaprenyl diphosphate + UMP. The protein operates within exopolysaccharide biosynthesis; colanic acid biosynthesis. Its function is as follows. Is the initiating enzyme for colanic acid (CA) synthesis. Catalyzes the transfer of the glucose-1-phosphate moiety from UDP-Glc onto the carrier lipid undecaprenyl phosphate (C55-P), forming a phosphoanhydride bond yielding to glucosyl-pyrophosphoryl-undecaprenol (Glc-PP-C55). Also possesses a weak galactose-1-P transferase activity. This is UDP-glucose:undecaprenyl-phosphate glucose-1-phosphate transferase (wcaJ) from Escherichia coli (strain K12).